The primary structure comprises 149 residues: Large ribosomal subunit protein bL9 (149 aa).

Belongs to the bacterial ribosomal protein bL9 family.

Functionally, binds to the 23S rRNA. In Leptospira interrogans serogroup Icterohaemorrhagiae serovar copenhageni (strain Fiocruz L1-130), this protein is Large ribosomal subunit protein bL9.